The primary structure comprises 304 residues: Glutaminase (304 aa).

Substrate contacts are provided by serine 63, asparagine 114, glutamate 158, asparagine 165, tyrosine 189, tyrosine 240, and valine 258.

The protein belongs to the glutaminase family. In terms of assembly, homotetramer.

It carries out the reaction L-glutamine + H2O = L-glutamate + NH4(+). The protein is Glutaminase of Shewanella baltica (strain OS185).